The following is a 580-amino-acid chain: D-erythrulose kinase (580 aa).

A DhaK domain is found at 7 to 327; sequence DPARFTEDML…WAAPADTPAY (321 aa). His-217 (tele-hemiaminal-histidine intermediate) is an active-site residue. Residues 329-360 are disordered; the sequence is KGAAQQHVSGERRSEATARSASSGPKLAELSD. Positions 368 to 570 constitute a DhaL domain; it reads RLVARAFDAM…LALCARTVAD (203 aa). Residues 397 to 403, 443 to 444, Gly-485, Arg-542, and 555 to 557 contribute to the ATP site; these read DGDHGRG, TS, and DAG.

The enzyme catalyses D-erythrulose + ATP = D-erythrulose 4-phosphate + ADP + H(+). Its pathway is carbohydrate metabolism; erythritol degradation. It functions in the pathway carbohydrate metabolism; D-threitol degradation. Functionally, catalyzes the phosphorylation of D-erythrulose to D-erythrulose-4P. Involved in the degradation pathways of erythritol and D-threitol, that allow M.smegmatis to grow on these compounds as the sole carbon source. This chain is D-erythrulose kinase, found in Mycolicibacterium smegmatis (strain ATCC 700084 / mc(2)155) (Mycobacterium smegmatis).